The chain runs to 250 residues: Flavin-dependent thymidylate synthase (250 aa).

Residues 7-233 form the ThyX domain; the sequence is LSVELIACSS…PTVFGDFQVE (227 aa). DUMP-binding positions include 92-95, 103-107, and arginine 172; these read ELVR and QLSQR. FAD contacts are provided by residues 95 to 97 and glutamine 103; that span reads RHR. The ThyX motif signature appears at 95-105; it reads RHRHFSFSQLS. FAD contacts are provided by residues 188–190 and histidine 194; that span reads NFR. DUMP is bound at residue arginine 199. The Involved in ionization of N3 of dUMP, leading to its activation role is filled by arginine 199.

This sequence belongs to the thymidylate synthase ThyX family. As to quaternary structure, homotetramer. FAD serves as cofactor.

The enzyme catalyses dUMP + (6R)-5,10-methylene-5,6,7,8-tetrahydrofolate + NADPH + H(+) = dTMP + (6S)-5,6,7,8-tetrahydrofolate + NADP(+). It functions in the pathway pyrimidine metabolism; dTTP biosynthesis. In terms of biological role, catalyzes the reductive methylation of 2'-deoxyuridine-5'-monophosphate (dUMP) to 2'-deoxythymidine-5'-monophosphate (dTMP) while utilizing 5,10-methylenetetrahydrofolate (mTHF) as the methyl donor, and NADPH and FADH(2) as the reductant. This chain is Flavin-dependent thymidylate synthase, found in Corynebacterium efficiens (strain DSM 44549 / YS-314 / AJ 12310 / JCM 11189 / NBRC 100395).